A 204-amino-acid polypeptide reads, in one-letter code: RNA-free ribonuclease P (204 aa).

It belongs to the HARP family.

The enzyme catalyses Endonucleolytic cleavage of RNA, removing 5'-extranucleotides from tRNA precursor.. In terms of biological role, RNA-free RNase P that catalyzes the removal of the 5'-leader sequence from pre-tRNA to produce the mature 5'-terminus. The sequence is that of RNA-free ribonuclease P from Pyrococcus abyssi (strain GE5 / Orsay).